A 131-amino-acid polypeptide reads, in one-letter code: Probable histone H2A.3 (131 aa).

The segment at M1–A23 is disordered. Low complexity predominate over residues G9–A23.

The protein belongs to the histone H2A family. As to quaternary structure, the nucleosome is a histone octamer containing two molecules each of H2A, H2B, H3 and H4 assembled in one H3-H4 heterotetramer and two H2A-H2B heterodimers. The octamer wraps approximately 147 bp of DNA. In terms of processing, not ubiquitinated. As to expression, expressed in meristems and dividing cells.

Its subcellular location is the nucleus. It localises to the chromosome. Its function is as follows. Core component of nucleosome. Nucleosomes wrap and compact DNA into chromatin, limiting DNA accessibility to the cellular machineries which require DNA as a template. Histones thereby play a central role in transcription regulation, DNA repair, DNA replication and chromosomal stability. DNA accessibility is regulated via a complex set of post-translational modifications of histones, also called histone code, and nucleosome remodeling. The sequence is that of Probable histone H2A.3 from Arabidopsis thaliana (Mouse-ear cress).